A 344-amino-acid chain; its full sequence is GTP 3',8-cyclase (344 aa).

The Radical SAM core domain maps to 19-239 (PFGRTIDYLR…ANYTLTDLPD (221 aa)). R28 serves as a coordination point for GTP. Positions 35 and 39 each coordinate [4Fe-4S] cluster. Position 41 (Y41) interacts with S-adenosyl-L-methionine. [4Fe-4S] cluster is bound at residue C42. A GTP-binding site is contributed by R77. S-adenosyl-L-methionine is bound at residue G81. T111 provides a ligand contact to GTP. An S-adenosyl-L-methionine-binding site is contributed by S135. K171 lines the GTP pocket. Position 205 (M205) interacts with S-adenosyl-L-methionine. 2 residues coordinate [4Fe-4S] cluster: C268 and C271. 273–275 (RVR) contacts GTP. C285 lines the [4Fe-4S] cluster pocket.

It belongs to the radical SAM superfamily. MoaA family. As to quaternary structure, monomer and homodimer. [4Fe-4S] cluster is required as a cofactor.

The enzyme catalyses GTP + AH2 + S-adenosyl-L-methionine = (8S)-3',8-cyclo-7,8-dihydroguanosine 5'-triphosphate + 5'-deoxyadenosine + L-methionine + A + H(+). It functions in the pathway cofactor biosynthesis; molybdopterin biosynthesis. Functionally, catalyzes the cyclization of GTP to (8S)-3',8-cyclo-7,8-dihydroguanosine 5'-triphosphate. The sequence is that of GTP 3',8-cyclase from Rhodopseudomonas palustris (strain TIE-1).